A 594-amino-acid chain; its full sequence is Type I restriction enzyme EcoEI specificity subunit (594 aa).

The protein belongs to the type-I restriction system S methylase family. The type I restriction/modification system is composed of three polypeptides R, M and S; the restriction enzyme has stoichiometry R(2)M(2)S(1) while the methyltransferase is M(2)S(1).

In terms of biological role, the specificity (S) subunit of a type I restriction enzyme; this subunit dictates DNA sequence specificity. The M and S subunits together form a methyltransferase (MTase) that methylates two adenine residues of the sequence 5'-GAGN(7)ATGC-3'. In the presence of the R subunit the complex can also act as an endonuclease, binding to the same target sequence but cutting the DNA some distance from this site. Whether the DNA is cut or modified depends on the methylation state of the target sequence. When the target site is unmodified, the DNA is cut. When the target site is hemimethylated, the complex acts as a maintenance MTase modifying the DNA so that both strands become methylated. After locating a non-methylated recognition site, the enzyme complex serves as a molecular motor that translocates DNA in an ATP-dependent manner until a collision occurs that triggers cleavage. This Escherichia coli protein is Type I restriction enzyme EcoEI specificity subunit.